The primary structure comprises 345 residues: Cytoskeleton protein RodZ (345 aa).

The Cytoplasmic portion of the chain corresponds to 1 to 111 (MNTEASQDQT…LGKKHKKRDG (111 aa)). Positions 19–79 (LRQARESLGL…KLVHLPEDEL (61 aa)) constitute an HTH cro/C1-type domain. Residues 30–49 (QQTVAERLCLKVSTIRDIEE) constitute a DNA-binding region (H-T-H motif). The chain crosses the membrane as a helical; Signal-anchor for type II membrane protein span at residues 112–132 (WLMSFTWLIVLVVLGLTGAWW). Residues 133–345 (WQNHQAQQAE…RVARLTVCVE (213 aa)) are Periplasmic-facing. The tract at residues 151–259 (SAQLSQNGGQ…PLPTADAGVS (109 aa)) is disordered. Residues 188–225 (PLTNHSGSAITNSATTSSVPKTTSTEPVDTANTNTTMH) show a composition bias toward polar residues. The span at 229–241 (AASAAVSPSQVPQ) shows a compositional bias: low complexity.

It belongs to the RodZ family.

It is found in the cell inner membrane. Its function is as follows. Cytoskeletal protein that is involved in cell-shape control through regulation of the length of the long axis. This chain is Cytoskeleton protein RodZ, found in Yersinia pestis bv. Antiqua (strain Antiqua).